A 70-amino-acid chain; its full sequence is Cuticle protein 16 isoform b (70 aa).

The protein is Cuticle protein 16 isoform b of Limulus polyphemus (Atlantic horseshoe crab).